A 960-amino-acid polypeptide reads, in one-letter code: MWRAGRAALACEVCQSLVKHSSGVQRNVPLQKLHLVSRSIYRSHHPALKLQRPQLRTSFQQFSSLTNLSLHKLKLSPTKYGYQPRRNFWPARLAARLLKLRYIILGSAVGGGYTAKKTFDEWKDMIPDLSDYKWIVPDFIWEIDEYIDLEKIRKALPSSEDLANFAPDLDKIAESLSLLKDFFTAGTPGETAFRATDHGSESDKHYRKVSDKEKIDQLQEELLHTQLKYQRILERLEKENKELRKLVLQKDDKGIHHRKLKKSLIDMYSEVLDVLSDYDASYNTQDHLPRVVVVGDQSAGKTSVLEMIAQARIFPRGSGEMMTRSPVKVTLSEGPHHVALFKDSSREFDLTKEEDLAALRHEIELRMRKNVKEGCTVSPETISLNVKGPGLQRMVLVDLPGVINTVTSGMAPDTKETIFSISKAYMQNPNAIILCIQDGSVDAERSIVTDLVSQMDPHGRRTIFVLTKVDLAEKNVASPSRIQQIIEGKLFPMKALGYFAVVTGKGNSSESIEAIREYEEEFFQNSKLLKTSMLKAHQVTTRNLSLAVSDCFWKMVRESVEQQADSFKATRFNLETEWKNNYPRLRELDRNELFEKAKNEILDEVISLSQVTPKHWEEILQQSLWERVSTHVIENIYLPAAQTMNSGTFNTTVDIKLKQWTDKQLPNKAVEVAWETLQDEFSRFMTEPKGKEHDDIFDKLKEAVKEESIKRHKWNDFAEDSLRVIQHNALEDRSISDKQQWDAAIYFMEEALQGRLKDTENAIENMIGPDWKKRWIYWKNRTQEQCVHNETKNELEKMLKVNDEHPAYLASDEITTVRKNLESRGVEVDPSLIKDTWHQVYRRHFLKTALNHCNLCRRGFYYYQRHFIDSELECNDVVLFWRIQRMLAITANTLRQQLTNTEVRRLEKNVKEVLEDFAEDGEKKVKLLTGKRVQLAEDLKKVREIQEKLDAFIEALHQEK.

Residues 1–87 (MWRAGRAALA…TKYGYQPRRN (87 aa)) constitute a mitochondrion transit peptide. The Mitochondrial matrix segment spans residues 88 to 96 (FWPARLAAR). The chain crosses the membrane as a helical span at residues 97-113 (LLKLRYIILGSAVGGGY). The Mitochondrial intermembrane portion of the chain corresponds to 114–770 (TAKKTFDEWK…NAIENMIGPD (657 aa)). Positions 210–254 (SDKEKIDQLQEELLHTQLKYQRILERLEKENKELRKLVLQKDDKG) form a coiled coil. An LQQQIQ motif motif is present at residues 217–222 (QLQEEL). Lysine 228 bears the N6-acetyllysine mark. The LQQQIQ motif motif lies at 234-239 (ERLEKE). One can recognise a Dynamin-type G domain in the interval 285-561 (QDHLPRVVVV…FWKMVRESVE (277 aa)). Residues 295–302 (GDQSAGKT) form a G1 motif region. GTP is bound by residues serine 298, glycine 300, lysine 301, threonine 302, serine 303, and glycine 317. Threonine 302 contributes to the Mg(2+) binding site. The interval 321-324 (MMTR) is G2 motif. 2 residues coordinate Mg(2+): threonine 323 and aspartate 398. The interval 398 to 401 (DLPG) is G3 motif. The tract at residues 467–470 (TKVD) is G4 motif. GTP-binding residues include lysine 468, aspartate 470, and threonine 503. A G5 motif region spans residues 501–504 (VVTG). Stalk region regions lie at residues 589 to 836 (DRNE…IKDT) and 874 to 928 (CNDV…VKLL). The paddle region stretch occupies residues 736-856 (SDKQQWDAAI…KTALNHCNLC (121 aa)). The stretch at 771 to 781 (WKKRWIYWKNR) is an intramembrane region. Residues 782–960 (TQEQCVHNET…AFIEALHQEK (179 aa)) lie on the Mitochondrial intermembrane side of the membrane. Cysteine 856 and cysteine 874 are joined by a disulfide. Positions 895 to 960 (RQQLTNTEVR…AFIEALHQEK (66 aa)) form a coiled coil.

The protein belongs to the TRAFAC class dynamin-like GTPase superfamily. Dynamin/Fzo/YdjA family. In terms of assembly, oligomeric complex consisting of membrane-bound and soluble forms of OPA1. Interacts with RCC1L; RCC1L acts as a guanine nucleotide exchange factor (GEF) for OPA1 by exchanging bound GDP for free GTP. Interacts with CHCHD3 and IMMT; these interactions occur preferentially with soluble OPA1 forms. Interacts with PRELID1. In terms of processing, cleaved by OMA1 or YME1L downstream of the transmembrane region in response to different signals to generate soluble forms. Cleaved by OMA1 at position S1 following stress conditions, generating the short soluble form (Dynamin-like GTPase OPA1, short form; S-OPA1). AFG3L2 is involved in the regulation of OMA1-dependent processing of OPA1. PARL-dependent proteolytic processing releases an antiapoptotic soluble form not required for mitochondrial fusion. Cleavage at position S2 by YME1L is required to mediate oxidative phosphorylation (OXPHOS)-induced mitochondrial fusion. Cleavage occurs in the sequence motif Leu-Gln-Gln-Gln-Ile-Gln (LQQQIQ). In terms of tissue distribution, expressed in brain as well as retinal ganglion, starbust amacrine and horizontal cells of the retina. Absent from nerve fibers and photoreceptor cells of the retina.

Its subcellular location is the mitochondrion inner membrane. It localises to the mitochondrion intermembrane space. The enzyme catalyses GTP + H2O = GDP + phosphate + H(+). Activated by guanine nucleotide exchange factor RCC1L. Dynamin-related GTPase that is essential for normal mitochondrial morphology by mediating fusion of the mitochondrial inner membranes, regulating cristae morphology and maintaining respiratory chain function. Exists in two forms: the transmembrane, long form (Dynamin-like GTPase OPA1, long form; L-OPA1), which is tethered to the inner mitochondrial membrane, and the short soluble form (Dynamin-like GTPase OPA1, short form; S-OPA1), which results from proteolytic cleavage and localizes in the intermembrane space. Both forms (L-OPA1 and S-OPA1) cooperate to catalyze the fusion of the mitochondrial inner membrane. The equilibrium between L-OPA1 and S-OPA1 is essential: excess levels of S-OPA1, produced by cleavage by OMA1 following loss of mitochondrial membrane potential, lead to an impaired equilibrium between L-OPA1 and S-OPA1, inhibiting mitochondrial fusion. The balance between L-OPA1 and S-OPA1 also influences cristae shape and morphology. Involved in remodeling cristae and the release of cytochrome c during apoptosis. Proteolytic processing by PARL in response to intrinsic apoptotic signals may lead to disassembly of OPA1 oligomers and release of the caspase activator cytochrome C (CYCS) into the mitochondrial intermembrane space. Acts as a regulator of T-helper Th17 cells, which are characterized by cells with fused mitochondria with tight cristae, by mediating mitochondrial membrane remodeling: OPA1 is required for interleukin-17 (IL-17) production. Its role in mitochondrial morphology is required for mitochondrial genome maintenance. Its function is as follows. Constitutes the transmembrane long form (L-OPA1) that plays a central role in mitochondrial inner membrane fusion and cristae morphology. L-OPA1 and the soluble short form (S-OPA1) form higher-order helical assemblies that coordinate the fusion of mitochondrial inner membranes. Inner membrane-anchored L-OPA1 molecules initiate membrane remodeling by recruiting soluble S-OPA1 to rapidly polymerize into a flexible cylindrical scaffold encaging the mitochondrial inner membrane. Once at the membrane surface, the formation of S-OPA1 helices induce bilayer curvature. OPA1 dimerization through the paddle region, which inserts into cardiolipin-containing membrane, promotes GTP hydrolysis and the helical assembly of a flexible OPA1 lattice on the membrane, which drives membrane curvature and mitochondrial fusion. Plays a role in the maintenance and remodeling of mitochondrial cristae, some invaginations of the mitochondrial inner membrane that provide an increase in the surface area. Probably acts by forming helical filaments at the inside of inner membrane tubes with the shape and dimensions of crista junctions. The equilibrium between L-OPA1 and S-OPA1 influences cristae shape and morphology: increased L-OPA1 levels promote cristae stacking and elongated mitochondria, while increased S-OPA1 levels correlated with irregular cristae packing and round mitochondria shape. Functionally, constitutes the soluble short form (S-OPA1) generated by cleavage by OMA1, which plays a central role in mitochondrial inner membrane fusion and cristae morphology. The transmembrane long form (L-OPA1) and the S-OPA1 form higher-order helical assemblies that coordinate the fusion of mitochondrial inner membranes. Inner membrane-anchored L-OPA1 molecules initiate membrane remodeling by recruiting soluble S-OPA1 to rapidly polymerize into a flexible cylindrical scaffold encaging the mitochondrial inner membrane. Once at the membrane surface, the formation of S-OPA1 helices induce bilayer curvature. OPA1 dimerization through the paddle region, which inserts into cardiolipin-containing membrane, promotes GTP hydrolysis and the helical assembly of a flexible OPA1 lattice on the membrane, which drives membrane curvature and mitochondrial fusion. Excess levels of S-OPA1 produced by cleavage by OMA1 following stress conditions that induce loss of mitochondrial membrane potential, lead to an impaired equilibrium between L-OPA1 and S-OPA1, thereby inhibiting mitochondrial fusion. Involved in mitochondrial safeguard in response to transient mitochondrial membrane depolarization by mediating flickering: cleavage by OMA1 leads to excess production of S-OPA1, preventing mitochondrial hyperfusion. Plays a role in the maintenance and remodeling of mitochondrial cristae, some invaginations of the mitochondrial inner membrane that provide an increase in the surface area. Probably acts by forming helical filaments at the inside of inner membrane tubes with the shape and dimensions of crista junctions. The equilibrium between L-OPA1 and S-OPA1 influences cristae shape and morphology: increased L-OPA1 levels promote cristae stacking and elongated mitochondria, while increased S-OPA1 levels correlated with irregular cristae packing and round mitochondria shape. In terms of biological role, isoforms that contain the alternative exon 4b are required for mitochondrial genome maintenance, possibly by anchoring the mitochondrial nucleoids to the inner mitochondrial membrane. The polypeptide is Dynamin-like GTPase OPA1, mitochondrial (Rattus norvegicus (Rat)).